Consider the following 132-residue polypeptide: Small ribosomal subunit protein uS8c (132 aa).

Belongs to the universal ribosomal protein uS8 family. As to quaternary structure, part of the 30S ribosomal subunit.

It is found in the plastid. The protein resides in the chloroplast. Functionally, one of the primary rRNA binding proteins, it binds directly to 16S rRNA central domain where it helps coordinate assembly of the platform of the 30S subunit. The protein is Small ribosomal subunit protein uS8c (rps8) of Platanus occidentalis (Sycamore).